The primary structure comprises 1374 residues: Y' element ATP-dependent helicase YLL067C (1374 aa).

A disordered region spans residues 321–345 (AGEAASSDHDQKISRVTRKRPREPK). Residues 375 to 552 (EIYMADTPSV…LQRIGLTGLA (178 aa)) enclose the Helicase ATP-binding domain. 388–395 (APPGYGKT) serves as a coordination point for ATP. Positions 498 to 501 (DEFH) match the DEAH box motif. Positions 609–758 (KLLLALFEIE…EFYGLESKKG (150 aa)) constitute a Helicase C-terminal domain. Positions 832-1011 (ANASTNATTN…ATTTESTNAS (180 aa)) are enriched in low complexity. The disordered stretch occupies residues 832–1035 (ANASTNATTN…RFHPVTDINK (204 aa)). Basic and acidic residues predominate over residues 1012–1035 (AKEDANKDGNAEDNRFHPVTDINK).

It belongs to the helicase family. Yeast subtelomeric Y' repeat subfamily.

Its function is as follows. Catalyzes DNA unwinding and is involved in telomerase-independent telomere maintenance. In Saccharomyces cerevisiae (strain ATCC 204508 / S288c) (Baker's yeast), this protein is Y' element ATP-dependent helicase YLL067C.